A 316-amino-acid chain; its full sequence is Membrane protein UL148 (316 aa).

Positions 1–20 (MLRLLFTLVLLALYGPSVDA) are cleaved as a signal peptide. The chain crosses the membrane as a helical span at residues 286 to 308 (FIVQYLNTLLITMMAAIWARVLI).

In terms of assembly, interacts with host SEL1L.

Its subcellular location is the host endoplasmic reticulum membrane. Functionally, chaperone protein that plays an important role in HCMV tropism. Cooperates with UL116 to regulate the abundance of gH-gL complexes in virion. Favors the incorporation of gL into virions once UL116 has regulated the early folding steps of virion assembly. Interacts with the host ERAD machinery and slows gO decay which would otherwise be constitutively degraded. Reorganizes the host endoplasmic reticulum and activates the unfolded protein response. Additionally, plays a role in the evasion of antiviral immune response by down-regulating cell surface expression of host CD58. Mechanistically, interacts with host CD58 and retains its immature form intracellularly. The capacity to cause endoplasmic reticulum reorganization and the intracellular retention of host CD58 are functionally independent properties. In Human cytomegalovirus (strain Merlin) (HHV-5), this protein is Membrane protein UL148 (UL148).